The following is an 87-amino-acid chain: Down syndrome critical region protein 10 (87 aa).

As to expression, expressed in placenta and testis.

The protein is Down syndrome critical region protein 10 (DSCR10) of Homo sapiens (Human).